The sequence spans 132 residues: MPVLTRSRQPRKQRRALYRAPLHARQKLVSATLSPELREKYGVRSLPVRKGDKVRVMRGDFKGHEGKVVKVDLRRLRIYIDGVTVTKADGTPVFRPIHPSNVMIVELDLSDEYRKKMIERRAAGRRGGGNSE.

It belongs to the universal ribosomal protein uL24 family. In terms of assembly, part of the 50S ribosomal subunit.

Its function is as follows. One of two assembly initiator proteins, it binds directly to the 5'-end of the 23S rRNA, where it nucleates assembly of the 50S subunit. Functionally, located at the polypeptide exit tunnel on the outside of the subunit. In Aeropyrum pernix (strain ATCC 700893 / DSM 11879 / JCM 9820 / NBRC 100138 / K1), this protein is Large ribosomal subunit protein uL24.